The following is a 271-amino-acid chain: Type III pantothenate kinase (271 aa).

6-13 (DVRNTNIV) is a binding site for ATP. Position 109 to 112 (109 to 112 (GADR)) interacts with substrate. Residue Asp-111 is the Proton acceptor of the active site. Asp-131 is a K(+) binding site. Position 134 (Thr-134) interacts with ATP. Residue Thr-186 participates in substrate binding.

Belongs to the type III pantothenate kinase family. Homodimer. Requires NH4(+) as cofactor. The cofactor is K(+).

It localises to the cytoplasm. The catalysed reaction is (R)-pantothenate + ATP = (R)-4'-phosphopantothenate + ADP + H(+). It participates in cofactor biosynthesis; coenzyme A biosynthesis; CoA from (R)-pantothenate: step 1/5. Its function is as follows. Catalyzes the phosphorylation of pantothenate (Pan), the first step in CoA biosynthesis. The protein is Type III pantothenate kinase of Rhodococcus jostii (strain RHA1).